We begin with the raw amino-acid sequence, 426 residues long: Vitamin D3 receptor (426 aa).

The segment at residues 21 to 96 (PRICGVCGDR…IGMMKEFILT (76 aa)) is a DNA-binding region (nuclear receptor). Residues Cys-24, Cys-27, Cys-41, Cys-44, Cys-60, Cys-66, Cys-76, and Cys-79 each contribute to the Zn(2+) site. 2 NR C4-type zinc fingers span residues 24 to 44 (CGVC…CEGC) and 60 to 84 (CPFN…LKRC). Residues 97–126 (DEEVQRKREMILKRKEEEALKDSLRPKLSE) form a hinge region. One can recognise an NR LBD domain in the interval 127 to 422 (EQQRIITTLL…LTPLLFEVFG (296 aa)). Tyr-143 serves as a coordination point for calcitriol. The segment at 147–215 (YSDFSQFRPP…NEEDSDDPSV (69 aa)) is disordered. Positions 175-191 (SFSGNSSSSCSDHCTSS) are enriched in low complexity. Positions 192–204 (PDTMEPTSFSNQD) are enriched in polar residues. Ser-235 contributes to the calcitriol binding site. An interaction with coactivator LXXLL motif region spans residues 244-262 (KMIPGFRDLTPEDQIVLLK). 4 residues coordinate calcitriol: Arg-272, Ser-276, His-304, and His-396. Positions 415 to 423 (PLLFEVFGN) match the 9aaTAD motif.

Belongs to the nuclear hormone receptor family. NR1 subfamily. As to quaternary structure, homodimer in the absence of bound vitamin D3. Heterodimer with RXRA after vitamin D3 binding. Interacts with MED1, NCOA1, NCOA2, NCOA3 and NCOA6 coactivators, leading to a strong increase of transcription of target genes. Interacts with the corepressor NCOR1. Interacts with SNW1. Interacts with IRX4, the interaction does not affect its transactivation activity. Interacts with CRY1. Interacts with CRY2 in a ligand-dependent manner. Ubiquitinated by UBR5, leading to its degradation: UBR5 specifically recognizes and binds ligand-bound VDR when it is not associated with coactivators (NCOAs). In presence of NCOAs, the UBR5-degron is not accessible, preventing its ubiquitination and degradation. As to expression, mammary gland, expression increases during lactation. Also found in colon, expression is down-regulated at parturition.

The protein localises to the nucleus. Its subcellular location is the cytoplasm. In terms of biological role, nuclear receptor for calcitriol, the active form of vitamin D3 which mediates the action of this vitamin on cells. Enters the nucleus upon vitamin D3 binding where it forms heterodimers with the retinoid X receptor/RXR. The VDR-RXR heterodimers bind to specific response elements on DNA and activate the transcription of vitamin D3-responsive target genes. Plays a central role in calcium homeostasis. Also functions as a receptor for the secondary bile acid lithocholic acid (LCA) and its metabolites. This is Vitamin D3 receptor (VDR) from Bos taurus (Bovine).